The primary structure comprises 117 residues: Small ribosomal subunit protein eS25 (117 aa).

Residues 1–34 are disordered; the sequence is MPPKKDPKGGKAPPSKKKEGSGGGKAKKKKWSKG. A compositionally biased stretch (basic residues) spans 25–34; the sequence is KAKKKKWSKG.

Belongs to the eukaryotic ribosomal protein eS25 family.

This Caenorhabditis elegans protein is Small ribosomal subunit protein eS25 (rps-25).